Reading from the N-terminus, the 429-residue chain is Carbamoyl phosphate synthase arginine-specific small chain (429 aa).

A mitochondrion-targeting transit peptide spans 1 to 20; that stretch reads MIRVIQPPLIASKQLFRRYL. The Glutamine amidotransferase type-1 domain maps to 218-406; that stretch reads HIAVLDCGAK…FENIEQYRAT (189 aa). The active-site Nucleophile is the Cys295. Catalysis depends on residues His379 and Glu381.

The protein belongs to the CarA family. In terms of assembly, heterodimer composed of 2 chains; the small (or glutamine) chain promotes the hydrolysis of glutamine to ammonia, which is used by the large (or ammonia) chain to synthesize carbamoyl phosphate.

The protein resides in the mitochondrion matrix. The catalysed reaction is hydrogencarbonate + L-glutamine + 2 ATP + H2O = carbamoyl phosphate + L-glutamate + 2 ADP + phosphate + 2 H(+). The enzyme catalyses L-glutamine + H2O = L-glutamate + NH4(+). The protein operates within amino-acid biosynthesis; L-arginine biosynthesis; carbamoyl phosphate from bicarbonate: step 1/1. Its function is as follows. Small subunit of the arginine-specific carbamoyl phosphate synthase (CPSase). CPSase catalyzes the formation of carbamoyl phosphate from the ammonia moiety of glutamine, carbonate, and phosphate donated by ATP, the first step of the arginine biosynthetic pathway. The small subunit (glutamine amidotransferase) binds and cleaves glutamine to supply the large subunit with the substrate ammonia. This Debaryomyces hansenii (strain ATCC 36239 / CBS 767 / BCRC 21394 / JCM 1990 / NBRC 0083 / IGC 2968) (Yeast) protein is Carbamoyl phosphate synthase arginine-specific small chain (CPA1).